The following is a 272-amino-acid chain: Shikimate dehydrogenase (NADP(+)) (272 aa).

Shikimate-binding positions include 14–16 (SKS) and Thr61. The active-site Proton acceptor is Lys65. Position 77 (Glu77) interacts with NADP(+). Asn86 and Asp102 together coordinate shikimate. NADP(+) is bound by residues 126–130 (GAGGA), 149–154 (NRTASR), and Met213. Tyr215 is a shikimate binding site. Gly237 lines the NADP(+) pocket.

It belongs to the shikimate dehydrogenase family. Homodimer.

The enzyme catalyses shikimate + NADP(+) = 3-dehydroshikimate + NADPH + H(+). The protein operates within metabolic intermediate biosynthesis; chorismate biosynthesis; chorismate from D-erythrose 4-phosphate and phosphoenolpyruvate: step 4/7. Its function is as follows. Involved in the biosynthesis of the chorismate, which leads to the biosynthesis of aromatic amino acids. Catalyzes the reversible NADPH linked reduction of 3-dehydroshikimate (DHSA) to yield shikimate (SA). The chain is Shikimate dehydrogenase (NADP(+)) from Salmonella choleraesuis (strain SC-B67).